Consider the following 210-residue polypeptide: Riboflavin kinase (210 aa).

Over residues 1–11 (MRPSNPRPPVT) the composition is skewed to pro residues. The disordered stretch occupies residues 1–24 (MRPSNPRPPVTGPDSGPEAPFPIR). Mg(2+) contacts are provided by Thr44 and Asn46. The Nucleophile role is filled by Glu113.

It belongs to the flavokinase family. The cofactor is Zn(2+). It depends on Mg(2+) as a cofactor.

The catalysed reaction is riboflavin + ATP = FMN + ADP + H(+). It functions in the pathway cofactor biosynthesis; FMN biosynthesis; FMN from riboflavin (ATP route): step 1/1. Functionally, catalyzes the phosphorylation of riboflavin (vitamin B2) to form flavin mononucleotide (FMN) coenzyme. The chain is Riboflavin kinase (fmn1) from Emericella nidulans (strain FGSC A4 / ATCC 38163 / CBS 112.46 / NRRL 194 / M139) (Aspergillus nidulans).